Reading from the N-terminus, the 461-residue chain is Ribonuclease inhibitor (461 aa).

Position 2 is an N-acetylserine (S2). The segment at 2–11 (SLDIQSLDIQ) is 2 X 5 AA tandem repeats of S-L-D-I-Q. LRR repeat units follow at residues 20 to 48 (WAEL…CKDI), 49 to 76 (SSAL…VHCV), 77 to 105 (LQGL…CGVL), 106 to 133 (SSTL…LQLL), 134 to 162 (CEGL…CEPL), 163 to 190 (ASVL…VRVL), 191 to 219 (CQGL…CRDL), 220 to 247 (CGIV…MAEL), 248 to 276 (CPGL…CGDL), 277 to 304 (CRVL…ARLL), 305 to 333 (CETL…CSHF), 334 to 361 (SSVL…VREL), 362 to 390 (CQGL…CSSL), 391 to 418 (AATL…ILQL), and 419 to 447 (VESV…EDRL). T82 carries the post-translational modification Phosphothreonine. S91 bears the Phosphoserine mark.

In terms of assembly, forms high-affinity heterodimers with RNASE1, ANG and RNASE2. In terms of processing, the N-terminus is blocked. Post-translationally, at least 30 of the 32 cysteine residues are in the reduced form.

The protein localises to the cytoplasm. It is found in the nucleus. Functionally, ribonuclease inhibitor which inhibits RNASE1, RNASE2 and angiogenin (ANG). May play a role in redox homeostasis. Required to inhibit the cytotoxic tRNA ribonuclease activity of ANG in the cytoplasm in absence of stress. Relocates to the nucleus in response to stress, relieving inhibition of ANG in the cytoplasm, and inhibiting the angiogenic activity of ANG in the nucleus. This chain is Ribonuclease inhibitor, found in Homo sapiens (Human).